Here is a 146-residue protein sequence, read N- to C-terminus: Putative pre-16S rRNA nuclease (146 aa).

The protein belongs to the YqgF nuclease family.

Its subcellular location is the cytoplasm. Its function is as follows. Could be a nuclease involved in processing of the 5'-end of pre-16S rRNA. The polypeptide is Putative pre-16S rRNA nuclease (Burkholderia pseudomallei (strain 668)).